The chain runs to 579 residues: Isocitrate dehydrogenase kinase/phosphatase (579 aa).

Residues 324–330 (ADGTPGM) and K345 each bind ATP. Residue D380 is part of the active site.

It belongs to the AceK family.

The protein localises to the cytoplasm. It carries out the reaction L-seryl-[isocitrate dehydrogenase] + ATP = O-phospho-L-seryl-[isocitrate dehydrogenase] + ADP + H(+). Its function is as follows. Bifunctional enzyme which can phosphorylate or dephosphorylate isocitrate dehydrogenase (IDH) on a specific serine residue. This is a regulatory mechanism which enables bacteria to bypass the Krebs cycle via the glyoxylate shunt in response to the source of carbon. When bacteria are grown on glucose, IDH is fully active and unphosphorylated, but when grown on acetate or ethanol, the activity of IDH declines drastically concomitant with its phosphorylation. The sequence is that of Isocitrate dehydrogenase kinase/phosphatase from Xanthomonas axonopodis pv. citri (strain 306).